We begin with the raw amino-acid sequence, 244 residues long: Precorrin-6A reductase (244 aa).

It belongs to the precorrin-6x reductase family.

The enzyme catalyses precorrin-6B + NADP(+) = precorrin-6A + NADPH + 2 H(+). Its pathway is cofactor biosynthesis; adenosylcobalamin biosynthesis; cob(II)yrinate a,c-diamide from precorrin-2 (aerobic route): step 6/10. Catalyzes the reduction of the macrocycle of precorrin-6X into precorrin-6Y. The chain is Precorrin-6A reductase (cobK) from Mycobacterium tuberculosis (strain CDC 1551 / Oshkosh).